A 244-amino-acid polypeptide reads, in one-letter code: Cell division protein ZapD (244 aa).

The protein belongs to the ZapD family. Interacts with FtsZ.

Its subcellular location is the cytoplasm. Cell division factor that enhances FtsZ-ring assembly. Directly interacts with FtsZ and promotes bundling of FtsZ protofilaments, with a reduction in FtsZ GTPase activity. The chain is Cell division protein ZapD from Shewanella sp. (strain MR-7).